A 384-amino-acid polypeptide reads, in one-letter code: Na(+)/H(+) antiporter NhaA (384 aa).

Transmembrane regions (helical) follow at residues 17 to 37 (SGLF…SAIA), 53 to 73 (LEYW…GLEL), 89 to 109 (MLPI…FLVM), 118 to 138 (GAGI…SLLG), 147 to 167 (IFLT…IAVF), 171 to 191 (TLLW…LILN), 198 to 218 (LIPY…SGVH), 251 to 271 (PVAF…VLSS), 283 to 303 (IGIA…LSML), 321 to 341 (ILAV…ITLL), and 354 to 374 (FVIL…LKYV).

The protein belongs to the NhaA Na(+)/H(+) (TC 2.A.33) antiporter family.

The protein resides in the cell inner membrane. It carries out the reaction Na(+)(in) + 2 H(+)(out) = Na(+)(out) + 2 H(+)(in). Functionally, na(+)/H(+) antiporter that extrudes sodium in exchange for external protons. In Flavobacterium psychrophilum (strain ATCC 49511 / DSM 21280 / CIP 103535 / JIP02/86), this protein is Na(+)/H(+) antiporter NhaA.